A 58-amino-acid chain; its full sequence is Ranakinin-N (58 aa).

Positions 1 to 22 (MFTMKKSLLLLFFLGTISMSLC) are cleaved as a signal peptide. The propeptide occupies 23 to 43 (EEKRDADEEETEGEAKMEDIK). Residues 25 to 58 (KRDADEEETEGEAKMEDIKRAEAVPPGFTPFRKP) are disordered. Residues 35 to 46 (GEAKMEDIKRAE) show a composition bias toward basic and acidic residues.

Expressed by the skin glands.

The protein resides in the secreted. Induces contraction of intestinal smooth muscle in isolated guinea pig ileum. May induce relaxation of arterial smooth muscle. May target bradykinin receptors (BDKRB). Lacks antibacterial activity against the Gram-positive bacterium S.aureus and the Gram-negative bacteria E.coli and B.dysenteria, and antifungal activity against C.albicans. This is Ranakinin-N from Hylarana nigrovittata (Black-striped frog).